A 197-amino-acid polypeptide reads, in one-letter code: Elongation factor Ts (197 aa).

Residues 81–84 (TDFV) form an involved in Mg(2+) ion dislocation from EF-Tu region.

The protein belongs to the EF-Ts family.

The protein localises to the cytoplasm. Its function is as follows. Associates with the EF-Tu.GDP complex and induces the exchange of GDP to GTP. It remains bound to the aminoacyl-tRNA.EF-Tu.GTP complex up to the GTP hydrolysis stage on the ribosome. The protein is Elongation factor Ts of Thermotoga neapolitana (strain ATCC 49049 / DSM 4359 / NBRC 107923 / NS-E).